The sequence spans 600 residues: UvrABC system protein C (600 aa).

A GIY-YIG domain is found at 15-92; the sequence is DKPGCYLMKD…IKKYQPYYNV (78 aa). The UVR domain occupies 197–232; sequence SQVKQDLTEKMTQASMNLEFERAAEFRDQLKYIEQT.

This sequence belongs to the UvrC family. Interacts with UvrB in an incision complex.

The protein localises to the cytoplasm. Functionally, the UvrABC repair system catalyzes the recognition and processing of DNA lesions. UvrC both incises the 5' and 3' sides of the lesion. The N-terminal half is responsible for the 3' incision and the C-terminal half is responsible for the 5' incision. The protein is UvrABC system protein C of Lactobacillus gasseri (strain ATCC 33323 / DSM 20243 / BCRC 14619 / CIP 102991 / JCM 1131 / KCTC 3163 / NCIMB 11718 / NCTC 13722 / AM63).